Here is a 159-residue protein sequence, read N- to C-terminus: Phosphopantetheine adenylyltransferase (159 aa).

Position 10 (threonine 10) interacts with substrate. ATP is bound by residues threonine 10–phenylalanine 11 and histidine 18. Residues lysine 42, methionine 74, and arginine 88 each contribute to the substrate site. ATP contacts are provided by residues glycine 89–arginine 91, glutamate 99, and tryptophan 124–serine 130.

Belongs to the bacterial CoaD family. Homohexamer. Mg(2+) is required as a cofactor.

The protein resides in the cytoplasm. The enzyme catalyses (R)-4'-phosphopantetheine + ATP + H(+) = 3'-dephospho-CoA + diphosphate. Its pathway is cofactor biosynthesis; coenzyme A biosynthesis; CoA from (R)-pantothenate: step 4/5. Its function is as follows. Reversibly transfers an adenylyl group from ATP to 4'-phosphopantetheine, yielding dephospho-CoA (dPCoA) and pyrophosphate. The chain is Phosphopantetheine adenylyltransferase from Escherichia coli O7:K1 (strain IAI39 / ExPEC).